The sequence spans 532 residues: 2,3-bisphosphoglycerate-independent phosphoglycerate mutase (532 aa).

Mn(2+) is bound by residues aspartate 15 and serine 65. The active-site Phosphoserine intermediate is the serine 65. Residues histidine 126, 156-157, arginine 188, arginine 194, 258-261, and lysine 331 each bind substrate; these read RD and RPDR. Aspartate 398, histidine 402, aspartate 439, histidine 440, and histidine 457 together coordinate Mn(2+).

The protein belongs to the BPG-independent phosphoglycerate mutase family. As to quaternary structure, monomer. The cofactor is Mn(2+).

The catalysed reaction is (2R)-2-phosphoglycerate = (2R)-3-phosphoglycerate. The protein operates within carbohydrate degradation; glycolysis; pyruvate from D-glyceraldehyde 3-phosphate: step 3/5. Functionally, catalyzes the interconversion of 2-phosphoglycerate and 3-phosphoglycerate. The sequence is that of 2,3-bisphosphoglycerate-independent phosphoglycerate mutase from Synechococcus elongatus (strain ATCC 33912 / PCC 7942 / FACHB-805) (Anacystis nidulans R2).